The sequence spans 426 residues: Gamma-glutamylputrescine oxidoreductase (426 aa).

Belongs to the gamma-glutamylputrescine oxidoreductase family.

It catalyses the reaction gamma-L-glutamylputrescine + O2 + H2O = 4-(gamma-L-glutamylamino)butanal + H2O2 + NH4(+). It functions in the pathway amine and polyamine degradation; putrescine degradation; 4-aminobutanoate from putrescine: step 2/4. Involved in the breakdown of putrescine via the oxidation of L-glutamylputrescine. The polypeptide is Gamma-glutamylputrescine oxidoreductase (puuB) (Escherichia coli (strain K12)).